A 459-amino-acid polypeptide reads, in one-letter code: Argininosuccinate lyase (459 aa).

The protein belongs to the lyase 1 family. Argininosuccinate lyase subfamily.

It is found in the cytoplasm. The enzyme catalyses 2-(N(omega)-L-arginino)succinate = fumarate + L-arginine. It participates in amino-acid biosynthesis; L-arginine biosynthesis; L-arginine from L-ornithine and carbamoyl phosphate: step 3/3. The polypeptide is Argininosuccinate lyase (Lactococcus lactis subsp. cremoris (strain MG1363)).